The following is a 640-amino-acid chain: Choline O-acetyltransferase (640 aa).

Ser17 carries the post-translational modification Phosphoserine. The active-site Proton acceptor is His334. At Ser365 the chain carries Phosphoserine. Residues 412-424, Ser450, and Gln551 each bind CoA; that span reads GKTF…YSPD. The segment at 614–640 is disordered; that stretch reads CSSRQPADSKPPAPKEKARGPSQAKQS.

The protein belongs to the carnitine/choline acetyltransferase family. Monomer.

The enzyme catalyses choline + acetyl-CoA = acetylcholine + CoA. Functionally, catalyzes the reversible synthesis of acetylcholine (ACh) from acetyl CoA and choline at cholinergic synapses. The sequence is that of Choline O-acetyltransferase (Chat) from Rattus norvegicus (Rat).